A 396-amino-acid polypeptide reads, in one-letter code: Lipid-A-disaccharide synthase (396 aa).

It belongs to the LpxB family.

The catalysed reaction is a lipid X + a UDP-2-N,3-O-bis[(3R)-3-hydroxyacyl]-alpha-D-glucosamine = a lipid A disaccharide + UDP + H(+). The protein operates within bacterial outer membrane biogenesis; LPS lipid A biosynthesis. Condensation of UDP-2,3-diacylglucosamine and 2,3-diacylglucosamine-1-phosphate to form lipid A disaccharide, a precursor of lipid A, a phosphorylated glycolipid that anchors the lipopolysaccharide to the outer membrane of the cell. This is Lipid-A-disaccharide synthase from Acinetobacter baylyi (strain ATCC 33305 / BD413 / ADP1).